Consider the following 451-residue polypeptide: Epi-neemfruitin B 7-O-acetyltransferse L7AT (451 aa).

Catalysis depends on proton acceptor residues His165 and Asp384.

The protein belongs to the plant acyltransferase family. Monomer. As to expression, mainly expressed in petioles and, to a lower extent, in roots.

The catalysed reaction is epi-neemfruitin B + acetyl-CoA = 7-acetyl-epi-neemfruitin B + CoA. It participates in secondary metabolite biosynthesis; terpenoid biosynthesis. In terms of biological role, acetyltransferase involved in the biosynthesis of limonoids triterpene natural products such as azadirachtin, an antifeedant widely used as bioinsecticide, and possessing many medicinal applications including anti-tumoral, anti-malarial, anti-rheumatic, antibacterial, anti-inflammatory, anti-pyretic and diuretic effects. Catalyzes the formation of 7-acetyl-epi-neemfruitin B from epi-neemfruitin B. This Melia azedarach (Chinaberry tree) protein is Epi-neemfruitin B 7-O-acetyltransferse L7AT.